The primary structure comprises 858 residues: Elongation factor 2b (858 aa).

One can recognise a tr-type G domain in the interval 17–362 (SNIRNMSVIA…MITIHLPSPV (346 aa)). Residues 26 to 33 (AHVDHGKS), 158 to 161 (NKMD), and 216 to 218 (SGL) contribute to the GTP site. At His715 the chain carries Diphthamide.

It belongs to the TRAFAC class translation factor GTPase superfamily. Classic translation factor GTPase family. EF-G/EF-2 subfamily. As to quaternary structure, binds to 80S ribosomes. Actively translating ribosomes show mutually exclusive binding of eIF5a (EIF5A or EIF5A2) and EEF2/eEF2. Interacts with serbp1; interaction sequesters eef2/eEF2 at the A-site of the ribosome, thereby blocking the interaction sites of the mRNA-tRNA complex, promoting ribosome stabilization and hibernation. Interacts with habp4; interaction takes place at the A-site of hibernating ribosomes and promotes ribosome stabilization.

The protein localises to the cytoplasm. Its subcellular location is the nucleus. It carries out the reaction GTP + H2O = GDP + phosphate + H(+). Functionally, catalyzes the GTP-dependent ribosomal translocation step during translation elongation. During this step, the ribosome changes from the pre-translocational (PRE) to the post-translocational (POST) state as the newly formed A-site-bound peptidyl-tRNA and P-site-bound deacylated tRNA move to the P and E sites, respectively. Catalyzes the coordinated movement of the two tRNA molecules, the mRNA and conformational changes in the ribosome. This Danio rerio (Zebrafish) protein is Elongation factor 2b.